Here is a 615-residue protein sequence, read N- to C-terminus: DNA mismatch repair protein MutL (615 aa).

Residues 362–397 (HFAEPAVREPVAPRYSPAPASGSRPAASWPNAQPGY) form a disordered region. The span at 373–391 (APRYSPAPASGSRPAASWP) shows a compositional bias: low complexity.

Belongs to the DNA mismatch repair MutL/HexB family.

This protein is involved in the repair of mismatches in DNA. It is required for dam-dependent methyl-directed DNA mismatch repair. May act as a 'molecular matchmaker', a protein that promotes the formation of a stable complex between two or more DNA-binding proteins in an ATP-dependent manner without itself being part of a final effector complex. The polypeptide is DNA mismatch repair protein MutL (Escherichia coli O6:H1 (strain CFT073 / ATCC 700928 / UPEC)).